Here is a 382-residue protein sequence, read N- to C-terminus: uncharacterized protein (382 aa).

12 helical membrane-spanning segments follow: residues 8-28 (VMLLLCGLLLLTLAIAVLNTL), 45-65 (MVSSSYFTGNLVGTLFTGYLI), 75-95 (YLASLIFAAGCVGLGVMVGFW), 102-122 (FIAGIGCAMIWVVVESALMCS), 131-151 (LLAAYMMVYYMGTFLGQLLVS), 157-177 (LLHVLPWVTGMILAGILPLLF), 204-224 (LGVNGCIISGIVLGSLYGLMP), 231-251 (GMANASIGFWMAVLVSAGILG), 270-290 (VQVFVVILGSIAMLTQAAMAP), 291-311 (ALFILGAAGFTLYPVAMAWAC), 325-345 (ALLLSYTVGSLLGPSFAAMLM), and 349-369 (SDNLLFIMIASVSFIYLLMLL).

This sequence belongs to the major facilitator superfamily. YcaD (TC 2.A.1.26) family.

The protein resides in the cell inner membrane. This is an uncharacterized protein from Salmonella newport (strain SL254).